Consider the following 422-residue polypeptide: Solanesyl diphosphate synthase 3, chloroplastic/mitochondrial (422 aa).

A chloroplast and mitochondrion-targeting transit peptide spans 1 to 32 (MLFTRSVARISSKFLRNRSFYGSSQSLASHRF). Isopentenyl diphosphate-binding residues include lysine 125, arginine 128, and histidine 174. Positions 181 and 185 each coordinate Mg(2+). Arginine 190 is an an all-trans-polyprenyl diphosphate binding site. Arginine 191 serves as a coordination point for isopentenyl diphosphate. Positions 267, 268, 305, and 322 each coordinate an all-trans-polyprenyl diphosphate.

Belongs to the FPP/GGPP synthase family. As to quaternary structure, homodimer. Mg(2+) serves as cofactor. As to expression, ubiquitous. Highest expression in seeds and shoot apical meristem.

The protein localises to the plastid. It localises to the chloroplast. Its subcellular location is the mitochondrion. It catalyses the reaction 5 isopentenyl diphosphate + (2E,6E,10E)-geranylgeranyl diphosphate = all-trans-nonaprenyl diphosphate + 5 diphosphate. In terms of biological role, may be involved in the supply of solanesyl diphosphate for ubiquinone-9 (UQ-9) biosynthesis in mitochondria. Synthesizes C25 to C45 medium / long-chain products depending on the type of substrate available. Can use geranyl diphosphate, farnesyl diphosphate or geranylgeranyl diphosphate as substrates, but not dimethylallyl diphosphate. The chain is Solanesyl diphosphate synthase 3, chloroplastic/mitochondrial from Arabidopsis thaliana (Mouse-ear cress).